Consider the following 348-residue polypeptide: Protein RecA (348 aa).

67 to 74 (GPESSGKT) contacts ATP.

This sequence belongs to the RecA family.

The protein resides in the cytoplasm. Functionally, can catalyze the hydrolysis of ATP in the presence of single-stranded DNA, the ATP-dependent uptake of single-stranded DNA by duplex DNA, and the ATP-dependent hybridization of homologous single-stranded DNAs. It interacts with LexA causing its activation and leading to its autocatalytic cleavage. The chain is Protein RecA from Kineococcus radiotolerans (strain ATCC BAA-149 / DSM 14245 / SRS30216).